The sequence spans 122 residues: UPF0102 protein CLL_A1253 (122 aa).

It belongs to the UPF0102 family.

The polypeptide is UPF0102 protein CLL_A1253 (Clostridium botulinum (strain Eklund 17B / Type B)).